The chain runs to 145 residues: MPGYTVKDVNQQEFVKALAAFFKKSGKLKKPDWVDTVKLGKHKELAPFDIDWYYIRTASVARHLYMRGGVGVGAMTKIYGGRQRNGTRPSHYSRGSRNVARKVLQSLEMLKMVEKDPNGGRRLTSIGQRDMDRIAGQVVVLSKKH.

Belongs to the eukaryotic ribosomal protein eS19 family. Component of the small ribosomal subunit.

The protein localises to the cytoplasm. It localises to the nucleus. Functionally, component of the small ribosomal subunit. The ribosome is a large ribonucleoprotein complex responsible for the synthesis of proteins in the cell. Required for pre-rRNA processing and maturation of 40S ribosomal subunits. The sequence is that of Small ribosomal subunit protein eS19 (rps19) from Myxine glutinosa (Atlantic hagfish).